We begin with the raw amino-acid sequence, 562 residues long: MVASGFLLIASFMLVLFVLSRPLGGFLARLIEGEPFSALQKVEAGLWRCSGVKNAEMNGWQYALAILCFNLLGIVLLFVLLMTQGSLPLNPEHLPGMSWHLALNTAVSFVTNTNWQAYSGENTLSYLSQMAGLTVQNFLSAATGIAVAFALIRAFARHSATTLGNAWVDLVRITLYVLLPIALIIALIFVSQGVLQNLDDYLHITTLEGVQQTLPMGPVASQEAIKVLGTNGGGFFGANSAHPFENPTAFSNFVQMLAIFLIPCALCFAFGQVVGDNRQGHALIWAMSLIFIVAVVVVMYAELAGNPHLSPLGADSNSNMEGKESRFGILATSLYAVVTTAASCGAVNAMHDSFTALGGMIPLWLMQIGEVVFGGVGSGLYGMLLFVLLTVFIAGLMIGRTPEYLGKKIDVFDMKMTALAILVTPTIVLLGTALALCTEAGRAGILNPGAHGFSEVLYALSSAANNNGSAFAGLSVNTPFYNLLLAAAMFIGRFGVILPVLAIASSLVAKKRQPAGNGTLPTGGLLFIGLLIGTVLLVGALTFIPALALGPVAEHLQVWLAH.

The next 12 helical transmembrane spans lie at 6–26 (FLLIASFMLVLFVLSRPLGGF), 62–82 (YALAILCFNLLGIVLLFVLLM), 132–152 (GLTVQNFLSAATGIAVAFALI), 175–195 (LYVLLPIALIIALIFVSQGVL), 253–273 (FVQMLAIFLIPCALCFAFGQV), 283–303 (LIWAMSLIFIVAVVVVMYAEL), 327–347 (FGILATSLYAVVTTAASCGAV), 356–376 (ALGGMIPLWLMQIGEVVFGGV), 379–399 (GLYGMLLFVLLTVFIAGLMIG), 416–436 (MTALAILVTPTIVLLGTALAL), 483–503 (LLLAAAMFIGRFGVILPVLAI), and 524–544 (GLLFIGLLIGTVLLVGALTFI).

The protein belongs to the KdpA family. The system is composed of three essential subunits: KdpA, KdpB and KdpC.

The protein resides in the cell inner membrane. Functionally, part of the high-affinity ATP-driven potassium transport (or Kdp) system, which catalyzes the hydrolysis of ATP coupled with the electrogenic transport of potassium into the cytoplasm. This subunit binds the periplasmic potassium ions and delivers the ions to the membrane domain of KdpB through an intramembrane tunnel. The protein is Potassium-transporting ATPase potassium-binding subunit of Yersinia pestis bv. Antiqua (strain Antiqua).